Consider the following 422-residue polypeptide: 3-isopropylmalate dehydratase large subunit (422 aa).

Positions 303, 363, and 366 each coordinate [4Fe-4S] cluster.

It belongs to the aconitase/IPM isomerase family. LeuC type 2 subfamily. In terms of assembly, heterodimer of LeuC and LeuD. It depends on [4Fe-4S] cluster as a cofactor.

The catalysed reaction is (2R,3S)-3-isopropylmalate = (2S)-2-isopropylmalate. Its pathway is amino-acid biosynthesis; L-leucine biosynthesis; L-leucine from 3-methyl-2-oxobutanoate: step 2/4. Its function is as follows. Catalyzes the isomerization between 2-isopropylmalate and 3-isopropylmalate, via the formation of 2-isopropylmaleate. The sequence is that of 3-isopropylmalate dehydratase large subunit from Wolinella succinogenes (strain ATCC 29543 / DSM 1740 / CCUG 13145 / JCM 31913 / LMG 7466 / NCTC 11488 / FDC 602W) (Vibrio succinogenes).